A 200-amino-acid chain; its full sequence is Shikimate kinase (200 aa).

Residue 41–46 (GVGKSS) participates in ATP binding. Ser-45 serves as a coordination point for Mg(2+). The substrate site is built by Asp-63, Arg-87, and Gly-109. Arg-147 lines the ATP pocket. Substrate is bound at residue Arg-166.

This sequence belongs to the shikimate kinase family. As to quaternary structure, monomer. It depends on Mg(2+) as a cofactor.

The protein localises to the cytoplasm. It catalyses the reaction shikimate + ATP = 3-phosphoshikimate + ADP + H(+). The protein operates within metabolic intermediate biosynthesis; chorismate biosynthesis; chorismate from D-erythrose 4-phosphate and phosphoenolpyruvate: step 5/7. Its function is as follows. Catalyzes the specific phosphorylation of the 3-hydroxyl group of shikimic acid using ATP as a cosubstrate. This chain is Shikimate kinase, found in Caulobacter vibrioides (strain NA1000 / CB15N) (Caulobacter crescentus).